Here is a 214-residue protein sequence, read N- to C-terminus: RING-H2 finger protein ATL67 (214 aa).

The helical transmembrane segment at 33-53 threads the bilayer; the sequence is LGFGYSIAIALGFLVLLSTVL. The RING-type; atypical zinc-finger motif lies at 138 to 180; that stretch reads CSICLCEYKEAEMLRMMPECKHYFHLCCLDAWLKLNGSCPVCR.

This sequence belongs to the RING-type zinc finger family. ATL subfamily.

Its subcellular location is the membrane. It carries out the reaction S-ubiquitinyl-[E2 ubiquitin-conjugating enzyme]-L-cysteine + [acceptor protein]-L-lysine = [E2 ubiquitin-conjugating enzyme]-L-cysteine + N(6)-ubiquitinyl-[acceptor protein]-L-lysine.. It functions in the pathway protein modification; protein ubiquitination. The chain is RING-H2 finger protein ATL67 (ATL67) from Arabidopsis thaliana (Mouse-ear cress).